Consider the following 568-residue polypeptide: MFS-type efflux transporter phmH (568 aa).

Residues 1 to 11 (MVSGTDTTEVG) show a composition bias toward polar residues. Positions 1-39 (MVSGTDTTEVGATTKAPPSEGTEGILDDHSSNSQPQAEK) are disordered. The next 7 helical transmembrane spans lie at 45–65 (YPLSFWLAFLGLCCTGLVSAL), 101–121 (YVMIGATIIFILGSGLCGGSS), 134–154 (GIGAGGINMLIDMIICDLVPM), 161–181 (IGLLFLFVSLGATIGPFVGGI), 199–219 (IFYINLPFGGVALLLLILFLH), 237–257 (VIGNSILIGATFAILYALTYG), and 268–288 (IAAPLTIGLVGLVAAFFWEMS). N-linked (GlcNAc...) asparagine glycosylation occurs at Asn-303. Transmembrane regions (helical) follow at residues 307–327 (AAAFFISFMCMLLAFWINFFY), 344–364 (VYTLPRAIAFPLFAAVGGAIV), 372–392 (TVHLVSTGIMPLVMGLSSILD), 399–419 (EWVIWQLLFGVSGGMMISTTL), 437–457 (TWSFVRSLGTIWGLSIPAAIF), and 515–535 (IGIVFGGVTFLSVFFEKEIHL). A glycan (N-linked (GlcNAc...) asparagine) is linked at Asn-563.

The protein belongs to the major facilitator superfamily.

The protein localises to the cell membrane. In terms of biological role, MFS-type efflux transporter; part of the gene cluster that mediates the biosynthesis of thethe mycotoxins phomacins, leucine-derived cytochalasans with potent actin polymerization-inhibitory activities and monocot-specific antigerminative activities. PhmH might be involved in the excretion of phomacins. This chain is MFS-type efflux transporter phmH, found in Phaeosphaeria nodorum (strain SN15 / ATCC MYA-4574 / FGSC 10173) (Glume blotch fungus).